A 206-amino-acid chain; its full sequence is Uridine kinase (206 aa).

Gly11 to Ser18 provides a ligand contact to ATP.

It belongs to the uridine kinase family.

It localises to the cytoplasm. The enzyme catalyses uridine + ATP = UMP + ADP + H(+). The catalysed reaction is cytidine + ATP = CMP + ADP + H(+). Its pathway is pyrimidine metabolism; CTP biosynthesis via salvage pathway; CTP from cytidine: step 1/3. It participates in pyrimidine metabolism; UMP biosynthesis via salvage pathway; UMP from uridine: step 1/1. The chain is Uridine kinase from Clostridium botulinum (strain Okra / Type B1).